The primary structure comprises 214 residues: Small ribosomal subunit protein uS3c (214 aa).

One can recognise a KH type-2 domain in the interval 39-111 (IRTYLNKLAK…QITINVVEVE (73 aa)).

The protein belongs to the universal ribosomal protein uS3 family. As to quaternary structure, part of the 30S ribosomal subunit.

The protein resides in the plastid. The protein localises to the chloroplast. The protein is Small ribosomal subunit protein uS3c (rps3) of Thalassiosira pseudonana (Marine diatom).